A 219-amino-acid polypeptide reads, in one-letter code: tRNA (guanine-N(7)-)-methyltransferase (219 aa).

Glutamate 46, glutamate 71, asparagine 100, and aspartate 122 together coordinate S-adenosyl-L-methionine. The active site involves aspartate 122. Residues lysine 126, aspartate 158, and threonine 199–glutamate 202 each bind substrate.

Belongs to the class I-like SAM-binding methyltransferase superfamily. TrmB family.

The enzyme catalyses guanosine(46) in tRNA + S-adenosyl-L-methionine = N(7)-methylguanosine(46) in tRNA + S-adenosyl-L-homocysteine. It functions in the pathway tRNA modification; N(7)-methylguanine-tRNA biosynthesis. Functionally, catalyzes the formation of N(7)-methylguanine at position 46 (m7G46) in tRNA. This chain is tRNA (guanine-N(7)-)-methyltransferase, found in Leuconostoc citreum (strain KM20).